The sequence spans 339 residues: Dihydroorotate dehydrogenase (quinone) (339 aa).

Residues 62 to 66 and Thr86 contribute to the FMN site; that span reads AGMDK. Substrate is bound at residue Lys66. 111–115 is a binding site for substrate; sequence NRMGF. FMN is bound by residues Asn139 and Asn172. Asn172 provides a ligand contact to substrate. Catalysis depends on Ser175, which acts as the Nucleophile. Asn177 provides a ligand contact to substrate. Lys217 and Thr245 together coordinate FMN. 246 to 247 contacts substrate; the sequence is NT. Residues Gly268, Gly297, and 318-319 each bind FMN; that span reads YS.

This sequence belongs to the dihydroorotate dehydrogenase family. Type 2 subfamily. Monomer. The cofactor is FMN.

It localises to the cell membrane. The enzyme catalyses (S)-dihydroorotate + a quinone = orotate + a quinol. The protein operates within pyrimidine metabolism; UMP biosynthesis via de novo pathway; orotate from (S)-dihydroorotate (quinone route): step 1/1. Catalyzes the conversion of dihydroorotate to orotate with quinone as electron acceptor. This Shewanella baltica (strain OS185) protein is Dihydroorotate dehydrogenase (quinone).